We begin with the raw amino-acid sequence, 378 residues long: Carbamoyl phosphate synthase small chain (378 aa).

A CPSase region spans residues Met1–Asn188. Residues Ser49, Gly244, and Gly246 each coordinate L-glutamine. In terms of domain architecture, Glutamine amidotransferase type-1 spans Lys192–Lys378. Catalysis depends on Cys272, which acts as the Nucleophile. Residues Leu273, Gln276, Asn314, and Tyr317 each coordinate L-glutamine. Active-site residues include His355 and Glu357.

Belongs to the CarA family. As to quaternary structure, composed of two chains; the small (or glutamine) chain promotes the hydrolysis of glutamine to ammonia, which is used by the large (or ammonia) chain to synthesize carbamoyl phosphate. Tetramer of heterodimers (alpha,beta)4.

It catalyses the reaction hydrogencarbonate + L-glutamine + 2 ATP + H2O = carbamoyl phosphate + L-glutamate + 2 ADP + phosphate + 2 H(+). The enzyme catalyses L-glutamine + H2O = L-glutamate + NH4(+). It participates in amino-acid biosynthesis; L-arginine biosynthesis; carbamoyl phosphate from bicarbonate: step 1/1. It functions in the pathway pyrimidine metabolism; UMP biosynthesis via de novo pathway; (S)-dihydroorotate from bicarbonate: step 1/3. Functionally, small subunit of the glutamine-dependent carbamoyl phosphate synthetase (CPSase). CPSase catalyzes the formation of carbamoyl phosphate from the ammonia moiety of glutamine, carbonate, and phosphate donated by ATP, constituting the first step of 2 biosynthetic pathways, one leading to arginine and/or urea and the other to pyrimidine nucleotides. The small subunit (glutamine amidotransferase) binds and cleaves glutamine to supply the large subunit with the substrate ammonia. This is Carbamoyl phosphate synthase small chain from Helicobacter hepaticus (strain ATCC 51449 / 3B1).